Here is a 311-residue protein sequence, read N- to C-terminus: 4-diphosphocytidyl-2-C-methyl-D-erythritol kinase (311 aa).

Residue lysine 16 is part of the active site. 100 to 110 (PIGAGLAGGSS) is a binding site for ATP. Residue aspartate 142 is part of the active site.

It belongs to the GHMP kinase family. IspE subfamily.

It catalyses the reaction 4-CDP-2-C-methyl-D-erythritol + ATP = 4-CDP-2-C-methyl-D-erythritol 2-phosphate + ADP + H(+). The protein operates within isoprenoid biosynthesis; isopentenyl diphosphate biosynthesis via DXP pathway; isopentenyl diphosphate from 1-deoxy-D-xylulose 5-phosphate: step 3/6. In terms of biological role, catalyzes the phosphorylation of the position 2 hydroxy group of 4-diphosphocytidyl-2C-methyl-D-erythritol. This chain is 4-diphosphocytidyl-2-C-methyl-D-erythritol kinase, found in Prochlorococcus marinus (strain AS9601).